Consider the following 272-residue polypeptide: 1,4-dihydroxy-6-naphtoate synthase (272 aa).

Residues 55–57 and 107–108 contribute to the substrate site; these read KLS and TA. Catalysis depends on His-145, which acts as the Proton acceptor.

Belongs to the MqnA/MqnD family. MqnD subfamily.

The catalysed reaction is cyclic dehypoxanthinylfutalosinate = 1,4-dihydroxy-6-naphthoate + dihydroxyacetone. The protein operates within quinol/quinone metabolism; menaquinone biosynthesis. Catalyzes the conversion of cyclic dehypoxanthine futalosine (cyclic DHFL) into 1,4-dihydroxy-6-naphthoate, a step in the biosynthesis of menaquinone (MK, vitamin K2). The protein is 1,4-dihydroxy-6-naphtoate synthase of Thermus thermophilus (strain ATCC 27634 / DSM 579 / HB8).